Reading from the N-terminus, the 64-residue chain is Alpha-mammal toxin Lqq5 (64 aa).

Residues 2–64 (KDGYIVDDKN…VSIKEKGRCN (63 aa)) form the LCN-type CS-alpha/beta domain. 4 disulfides stabilise this stretch: cysteine 12-cysteine 63, cysteine 16-cysteine 36, cysteine 22-cysteine 46, and cysteine 26-cysteine 48. Asparagine 64 carries the asparagine amide modification.

This sequence belongs to the long (4 C-C) scorpion toxin superfamily. Sodium channel inhibitor family. Alpha subfamily. Expressed by the venom gland.

The protein resides in the secreted. Functionally, alpha toxins bind voltage-independently at site-3 of sodium channels (Nav) and inhibit the inactivation of the activated channels, thereby blocking neuronal transmission. Is active on mammals and bind with high affinity to rat brain synaptosome. Does not display phospholipid-binding activity. The protein is Alpha-mammal toxin Lqq5 of Leiurus quinquestriatus quinquestriatus (Egyptian scorpion).